The following is a 535-amino-acid chain: Cytochrome P450 4c3 (535 aa).

Heme contacts are provided by Glu-342 and Cys-481.

This sequence belongs to the cytochrome P450 family. Heme serves as cofactor.

The protein resides in the endoplasmic reticulum membrane. It localises to the microsome membrane. May be involved in the metabolism of insect hormones and in the breakdown of synthetic insecticides. This Drosophila melanogaster (Fruit fly) protein is Cytochrome P450 4c3 (Cyp4c3).